Reading from the N-terminus, the 245-residue chain is Dehydrogenase/reductase SDR family member 6 (245 aa).

Residues 16–18, Asp37, and Asp58 each bind NAD(+); that span reads QGI. Arg144 lines the substrate pocket. Tyr147 (proton acceptor) is an active-site residue. Residues Lys151 and 180 to 184 contribute to the NAD(+) site; that span reads VDTPS. Substrate is bound by residues Arg188 and Arg205.

The protein belongs to the short-chain dehydrogenases/reductases (SDR) family. Homotetramer.

It localises to the cytoplasm. The catalysed reaction is cis-4-hydroxy-L-proline + NAD(+) = 4-oxo-L-proline + NADH + H(+). The enzyme catalyses (R)-3-hydroxybutanoate + NAD(+) = acetoacetate + NADH + H(+). The protein operates within amino-acid metabolism. Its pathway is siderophore biosynthesis. NAD(H)-dependent dehydrogenase/reductase with a preference for cyclic substrates. Catalyzes stereoselective conversion of 4-oxo-L-proline to cis-4-hydroxy-L-proline, likely a detoxification mechanism for ketoprolines. Mediates the formation of 2,5-dihydroxybenzoate (2,5-DHBA), a siderophore that chelates free cytoplasmic iron, thereby regulating iron transport and homeostasis while protecting cells against free radical-induced oxidative stress. The iron-siderophore complex is imported into mitochondria, providing an iron source for mitochondrial metabolic processes in particular heme synthesis. May act as a 3-hydroxybutyrate dehydrogenase. The sequence is that of Dehydrogenase/reductase SDR family member 6 (bdh2) from Danio rerio (Zebrafish).